The primary structure comprises 332 residues: Casein kinase II subunit alpha (332 aa).

Residues 43–327 (YEIIRKVGRG…TCQEAMAHPY (285 aa)) form the Protein kinase domain. ATP-binding positions include 49-57 (VGRGKYSEV) and lysine 72. Residue aspartate 160 is the Proton acceptor of the active site.

This sequence belongs to the protein kinase superfamily. Ser/Thr protein kinase family. CK2 subfamily. As to quaternary structure, tetramer composed of two alpha chains, one beta chain and one beta' chain.

It catalyses the reaction L-seryl-[protein] + ATP = O-phospho-L-seryl-[protein] + ADP + H(+). The catalysed reaction is L-threonyl-[protein] + ATP = O-phospho-L-threonyl-[protein] + ADP + H(+). In terms of biological role, catalytic subunit of a constitutively active serine/threonine-protein kinase complex that phosphorylates a large number of substrates containing acidic residues C-terminal to the phosphorylated serine or threonine. The chain is Casein kinase II subunit alpha from Schizosaccharomyces pombe (strain 972 / ATCC 24843) (Fission yeast).